A 436-amino-acid chain; its full sequence is ATP-dependent protease ATPase subunit HslU (436 aa).

ATP is bound by residues Ile18, 60 to 65 (GVGKTE), Asp249, Glu314, and Arg386.

It belongs to the ClpX chaperone family. HslU subfamily. In terms of assembly, a double ring-shaped homohexamer of HslV is capped on each side by a ring-shaped HslU homohexamer. The assembly of the HslU/HslV complex is dependent on binding of ATP.

The protein localises to the cytoplasm. ATPase subunit of a proteasome-like degradation complex; this subunit has chaperone activity. The binding of ATP and its subsequent hydrolysis by HslU are essential for unfolding of protein substrates subsequently hydrolyzed by HslV. HslU recognizes the N-terminal part of its protein substrates and unfolds these before they are guided to HslV for hydrolysis. This is ATP-dependent protease ATPase subunit HslU from Chelativorans sp. (strain BNC1).